The sequence spans 1012 residues: Alanine--tRNA ligase, mitochondrial (1012 aa).

Residues 1–24 (MYNSAKQLQRVLTAREIRKTFLDH) constitute a mitochondrion transit peptide. 4 residues coordinate Zn(2+): histidine 656, histidine 660, cysteine 766, and histidine 770.

Belongs to the class-II aminoacyl-tRNA synthetase family. Monomer. It depends on Zn(2+) as a cofactor.

The protein localises to the mitochondrion. It carries out the reaction tRNA(Ala) + L-alanine + ATP = L-alanyl-tRNA(Ala) + AMP + diphosphate. In terms of biological role, catalyzes the attachment of alanine to tRNA(Ala) in a two-step reaction: alanine is first activated by ATP to form Ala-AMP and then transferred to the acceptor end of tRNA(Ala). Also edits incorrectly charged tRNA(Ala) via its editing domain. The chain is Alanine--tRNA ligase, mitochondrial from Drosophila melanogaster (Fruit fly).